Consider the following 445-residue polypeptide: C4-dicarboxylate transport protein (445 aa).

The next 8 membrane-spanning stretches (helical) occupy residues Val-24–Pro-44, Leu-62–Ile-82, Phe-105–Ala-125, Gly-163–Gly-183, Phe-201–Phe-221, Leu-234–Gly-254, Ile-322–Gly-342, and Ala-370–Ile-390.

This sequence belongs to the dicarboxylate/amino acid:cation symporter (DAACS) (TC 2.A.23) family.

It localises to the cell inner membrane. In terms of biological role, responsible for the transport of dicarboxylates such as succinate, fumarate, and malate from the periplasm across the membrane. This is C4-dicarboxylate transport protein from Rhodopseudomonas palustris (strain ATCC BAA-98 / CGA009).